A 397-amino-acid polypeptide reads, in one-letter code: Cathepsin E (397 aa).

An N-terminal signal peptide occupies residues Met-1–Gly-16. A propeptide spans Ile-17 to Phe-49 (activation peptide). In terms of domain architecture, Peptidase A1 spans Tyr-74–Ala-385. The active site involves Asp-92. A disulfide bridge links Cys-105 with Cys-110. N-linked (GlcNAc...) asparagine glycosylation occurs at Asn-139. Cys-268 and Cys-272 are oxidised to a cystine. Asp-277 is a catalytic residue. Residues Cys-310 and Cys-344 are joined by a disulfide bond.

It belongs to the peptidase A1 family. Homodimer; disulfide-linked. Post-translationally, glycosylated. Contains high mannose-type oligosaccharide. As to expression, found in the larval foregut and adult stomach.

The protein localises to the endosome. The enzyme catalyses Similar to cathepsin D, but slightly broader specificity.. In terms of biological role, may have a role in immune function. Probably involved in the processing of antigenic peptides during MHC class II-mediated antigen presentation. In Aquarana catesbeiana (American bullfrog), this protein is Cathepsin E (CTSE).